A 901-amino-acid chain; its full sequence is Clathrin coat assembly protein AP180 (901 aa).

Positions 14-145 (QYSVTGSAVA…FSYRQMAFDF (132 aa)) constitute an ENTH domain. Disordered regions lie at residues 285–326 (LEGK…DTSP), 397–424 (PISDPFAPEPSPPTTTTEPASASASTTT), 497–522 (PETSAPVVTPTASTAPPVPATAPSPA), and 573–606 (AAAPKPDAAPSIDLFGTDAFSSPPRGASPVPESS). Residues Ser-296, Ser-300, and Ser-306 each carry the phosphoserine modification. The span at 302–324 (LSKSSPATTVTSPNSTPAKTIDT) shows a compositional bias: polar residues. O-linked (GlcNAc) threonine glycosylation occurs at Thr-310. A Phosphoserine modification is found at Ser-313. The residue at position 317 (Thr-317) is a Phosphothreonine. Low complexity-rich tracts occupy residues 410–424 (TTTTEPASASASTTT) and 500–511 (SAPVVTPTASTA). Over residues 512 to 522 (PPVPATAPSPA) the composition is skewed to pro residues. Ser-594, Ser-600, Ser-621, Ser-627, and Ser-761 each carry phosphoserine. 2 disordered regions span residues 803–845 (SAGV…GMTM) and 857–901 (MMRP…KDFL). Positions 835 to 845 (GMPPSGTGMTM) are enriched in low complexity. An Asymmetric dimethylarginine; alternate modification is found at Arg-859. Arg-859 is modified (omega-N-methylarginine; alternate). The span at 870–882 (TQLSPSPTPATQS) shows a compositional bias: polar residues. Residues 887 to 901 (PAKDPLADLNIKDFL) are compositionally biased toward basic and acidic residues.

It belongs to the PICALM/SNAP91 family. In terms of assembly, binds AP2A2. Interacts with AP2B1; clathrin competes with SNAP91. Thr-310 can be modified by the addition of N-acetylglucosamine which can be further phosphorylated. There is no evidence for direct Thr-310 phosphorylation. Brain. Associated with the synapses.

Its subcellular location is the cell membrane. It is found in the membrane. It localises to the coated pit. In terms of biological role, adaptins are components of the adaptor complexes which link clathrin to receptors in coated vesicles. Clathrin-associated protein complexes are believed to interact with the cytoplasmic tails of membrane proteins, leading to their selection and concentration. Binding of AP180 to clathrin triskelia induces their assembly into 60-70 nm coats. The protein is Clathrin coat assembly protein AP180 (Snap91) of Mus musculus (Mouse).